We begin with the raw amino-acid sequence, 343 residues long: Ribosomal RNA small subunit methyltransferase C (343 aa).

The protein belongs to the methyltransferase superfamily. RsmC family. Monomer.

The protein localises to the cytoplasm. The catalysed reaction is guanosine(1207) in 16S rRNA + S-adenosyl-L-methionine = N(2)-methylguanosine(1207) in 16S rRNA + S-adenosyl-L-homocysteine + H(+). Functionally, specifically methylates the guanine in position 1207 of 16S rRNA in the 30S particle. The polypeptide is Ribosomal RNA small subunit methyltransferase C (Escherichia coli O157:H7).